A 485-amino-acid chain; its full sequence is Cysteine--tRNA ligase (485 aa).

Residue Cys-27 participates in Zn(2+) binding. The short motif at 29–39 (ITAYDLCHIGH) is the 'HIGH' region element. Cys-208, His-233, and Glu-237 together coordinate Zn(2+). Residues 265 to 269 (KMSKS) carry the 'KMSKS' region motif. Lys-268 serves as a coordination point for ATP.

It belongs to the class-I aminoacyl-tRNA synthetase family. As to quaternary structure, monomer. Zn(2+) is required as a cofactor.

The protein resides in the cytoplasm. It carries out the reaction tRNA(Cys) + L-cysteine + ATP = L-cysteinyl-tRNA(Cys) + AMP + diphosphate. This chain is Cysteine--tRNA ligase, found in Nitratidesulfovibrio vulgaris (strain ATCC 29579 / DSM 644 / CCUG 34227 / NCIMB 8303 / VKM B-1760 / Hildenborough) (Desulfovibrio vulgaris).